Reading from the N-terminus, the 240-residue chain is MLRHDGRSNTQLRSVRILRNYIKHAEGSVLIEVGDTKVICTASVEERIPPFKKDSGEGWVTAEYSMLPRATAVRNQRDISKLKLNGRSSEIQRLIGRSLRTIVDLKLLGERTITIDCDVIQADGGTRTASITGSYVALVDACRTLVKKGLISKMPVTGTVAATSVGIVNGEELLDLCYIEDSNAEVDMNVIKTDKGEFIEIQATGEKSSFSKKQLDQLLNLAESGIHELIKAQNEVLWKD.

Phosphate is bound by residues arginine 87 and 125-127 (GTR).

Belongs to the RNase PH family. As to quaternary structure, homohexameric ring arranged as a trimer of dimers.

It carries out the reaction tRNA(n+1) + phosphate = tRNA(n) + a ribonucleoside 5'-diphosphate. Phosphorolytic 3'-5' exoribonuclease that plays an important role in tRNA 3'-end maturation. Removes nucleotide residues following the 3'-CCA terminus of tRNAs; can also add nucleotides to the ends of RNA molecules by using nucleoside diphosphates as substrates, but this may not be physiologically important. Probably plays a role in initiation of 16S rRNA degradation (leading to ribosome degradation) during starvation. The polypeptide is Ribonuclease PH (Ruminiclostridium cellulolyticum (strain ATCC 35319 / DSM 5812 / JCM 6584 / H10) (Clostridium cellulolyticum)).